The chain runs to 131 residues: uncharacterized protein (131 aa).

The next 3 membrane-spanning stretches (helical) occupy residues 13–35, 60–79, and 100–119; these read RFIK…TFPI, LVAL…TYVC, and LFEI…WNIT.

It localises to the membrane. This is an uncharacterized protein from Saccharomyces cerevisiae (strain ATCC 204508 / S288c) (Baker's yeast).